The chain runs to 403 residues: Ribosomal RNA large subunit methyltransferase I (403 aa).

The region spanning 9-88 (YPRLVLSKGR…ESIDIAFFTR (80 aa)) is the PUA domain.

The protein belongs to the methyltransferase superfamily. RlmI family.

Its subcellular location is the cytoplasm. It catalyses the reaction cytidine(1962) in 23S rRNA + S-adenosyl-L-methionine = 5-methylcytidine(1962) in 23S rRNA + S-adenosyl-L-homocysteine + H(+). In terms of biological role, specifically methylates the cytosine at position 1962 (m5C1962) of 23S rRNA. This is Ribosomal RNA large subunit methyltransferase I from Salmonella paratyphi A (strain ATCC 9150 / SARB42).